The sequence spans 208 residues: Ribosomal RNA large subunit methyltransferase E (208 aa).

S-adenosyl-L-methionine contacts are provided by Gly-62, Trp-64, Asp-82, Asp-98, and Asp-123. Lys-163 functions as the Proton acceptor in the catalytic mechanism.

This sequence belongs to the class I-like SAM-binding methyltransferase superfamily. RNA methyltransferase RlmE family.

The protein localises to the cytoplasm. The catalysed reaction is uridine(2552) in 23S rRNA + S-adenosyl-L-methionine = 2'-O-methyluridine(2552) in 23S rRNA + S-adenosyl-L-homocysteine + H(+). In terms of biological role, specifically methylates the uridine in position 2552 of 23S rRNA at the 2'-O position of the ribose in the fully assembled 50S ribosomal subunit. The protein is Ribosomal RNA large subunit methyltransferase E of Haemophilus ducreyi (strain 35000HP / ATCC 700724).